Consider the following 548-residue polypeptide: ADP,ATP carrier protein 1 (548 aa).

2 consecutive transmembrane segments (helical) span residues 39–59 and 75–95; these read RPVF…YSVS and SIPY…VFSI. Asn101 carries an N-linked (GlcNAc...) asparagine glycan. The next 8 membrane-spanning stretches (helical) occupy residues 107 to 127, 149 to 169, 171 to 191, 204 to 224, 239 to 259, 302 to 322, 350 to 370, and 374 to 394; these read VFSI…TVLM, MVFM…SWTS, LMYL…FFAL, FIPL…FSMK, LFFR…IYLI, LVLA…MVEA, IQLA…PALI, and GFLY…ASVF. Residues Asn400 and Asn406 are each glycosylated (N-linked (GlcNAc...) asparagine). The chain crosses the membrane as a helical span at residues 410–430; sequence LGFVSIGENLWLEQLLGAIIV. A glycan (N-linked (GlcNAc...) asparagine) is linked at Asn488. The chain crosses the membrane as a helical span at residues 494-514; sequence KAAISSLTIVTVITACWGFAV.

It belongs to the ADP/ATP translocase tlc family.

The protein localises to the cell membrane. ATP transporter involved in the uptake of ATP from the host cell cytoplasm. Provides the microsporidian cell with host ATP in exchange for ADP. This is an obligate exchange system. This energy acquiring activity is an important component of microsporidian parasitism. The polypeptide is ADP,ATP carrier protein 1 (ANC1) (Paranosema grylli (Microsporidian parasite)).